Here is a 132-residue protein sequence, read N- to C-terminus: Small ribosomal subunit protein eS6 (132 aa).

Belongs to the eukaryotic ribosomal protein eS6 family.

This is Small ribosomal subunit protein eS6 from Methanoculleus marisnigri (strain ATCC 35101 / DSM 1498 / JR1).